The following is a 345-amino-acid chain: Tetraacyldisaccharide 4'-kinase (345 aa).

54 to 61 (TLGGAGKT) contributes to the ATP binding site.

Belongs to the LpxK family.

It carries out the reaction a lipid A disaccharide + ATP = a lipid IVA + ADP + H(+). The protein operates within glycolipid biosynthesis; lipid IV(A) biosynthesis; lipid IV(A) from (3R)-3-hydroxytetradecanoyl-[acyl-carrier-protein] and UDP-N-acetyl-alpha-D-glucosamine: step 6/6. In terms of biological role, transfers the gamma-phosphate of ATP to the 4'-position of a tetraacyldisaccharide 1-phosphate intermediate (termed DS-1-P) to form tetraacyldisaccharide 1,4'-bis-phosphate (lipid IVA). The sequence is that of Tetraacyldisaccharide 4'-kinase from Allorhizobium ampelinum (strain ATCC BAA-846 / DSM 112012 / S4) (Agrobacterium vitis (strain S4)).